A 100-amino-acid chain; its full sequence is Urease subunit gamma (100 aa).

The protein belongs to the urease gamma subunit family. Heterotrimer of UreA (gamma), UreB (beta) and UreC (alpha) subunits. Three heterotrimers associate to form the active enzyme.

Its subcellular location is the cytoplasm. It catalyses the reaction urea + 2 H2O + H(+) = hydrogencarbonate + 2 NH4(+). It participates in nitrogen metabolism; urea degradation; CO(2) and NH(3) from urea (urease route): step 1/1. The protein is Urease subunit gamma of Nitrosospira multiformis (strain ATCC 25196 / NCIMB 11849 / C 71).